The primary structure comprises 176 residues: MNKDDDKEGLAMFSALIDGIKPITQNKRHFRTPLKTKQEIELKEQQLHANSYFSDTYQPLLPVQGPMRWLEEGIDSLELKRLRRGDYQPDLLLDLHGYRQSEAKLELAALIQACVKQQSLCCCIMHGYGSGILKQQVPMWLVQHPMVKAFHQAPKEWGGDAALLVLIDIGEQPHRR.

The 76-residue stretch at 93-168 (LDLHGYRQSE…GDAALLVLID (76 aa)) folds into the Smr domain.

This sequence belongs to the SmrB family. Associates with collided ribosomes, but not with correctly translating polysomes.

Acts as a ribosome collision sensor. Detects stalled/collided disomes (pairs of ribosomes where the leading ribosome is stalled and a second ribosome has collided with it) and endonucleolytically cleaves mRNA at the 5' boundary of the stalled ribosome. Stalled/collided disomes form a new interface (primarily via the 30S subunits) that binds SmrB. Cleaved mRNA becomes available for tmRNA ligation, leading to ribosomal subunit dissociation and rescue of stalled ribosomes. This is Ribosome rescue factor SmrB from Shewanella baltica (strain OS195).